The following is a 101-amino-acid chain: NADH-quinone oxidoreductase subunit K (101 aa).

The next 3 helical transmembrane spans lie at 4–24, 30–50, and 62–82; these read LGHMLALGAVLFAISLAGIFL, IVLLMSIELMLLSVNVNFVAF, and FVFFILTVAAAEAAIGLAILV.

It belongs to the complex I subunit 4L family. NDH-1 is composed of 14 different subunits. Subunits NuoA, H, J, K, L, M, N constitute the membrane sector of the complex.

It is found in the cell inner membrane. It carries out the reaction a quinone + NADH + 5 H(+)(in) = a quinol + NAD(+) + 4 H(+)(out). NDH-1 shuttles electrons from NADH, via FMN and iron-sulfur (Fe-S) centers, to quinones in the respiratory chain. The immediate electron acceptor for the enzyme in this species is believed to be ubiquinone. Couples the redox reaction to proton translocation (for every two electrons transferred, four hydrogen ions are translocated across the cytoplasmic membrane), and thus conserves the redox energy in a proton gradient. The protein is NADH-quinone oxidoreductase subunit K of Stenotrophomonas maltophilia (strain R551-3).